The sequence spans 1002 residues: UPF0182 protein Mvan_1814 (1002 aa).

Helical transmembrane passes span 16-36, 61-81, 112-132, 174-194, 209-229, 258-278, and 286-306; these read VMIA…RLVD, LLLF…AMAL, LVGI…AQNY, FAAT…FGGI, IQLI…YWLD, KLIL…AIVL, and IGVV…PLVV. Residues 891–958 are disordered; sequence LFGPGADATA…TGPTQLSAGK (68 aa). Residues 893–923 show a composition bias toward low complexity; sequence GPGADATATGPAATEPPAGQAPQPQGNNQPP. The segment covering 937–950 has biased composition (pro residues); the sequence is PQQPEVPVAVPPTG.

The protein belongs to the UPF0182 family.

The protein resides in the cell membrane. This is UPF0182 protein Mvan_1814 from Mycolicibacterium vanbaalenii (strain DSM 7251 / JCM 13017 / BCRC 16820 / KCTC 9966 / NRRL B-24157 / PYR-1) (Mycobacterium vanbaalenii).